Here is a 389-residue protein sequence, read N- to C-terminus: 8-amino-7-oxononanoate synthase (389 aa).

Arg19 provides a ligand contact to substrate. 106-107 (GY) provides a ligand contact to pyridoxal 5'-phosphate. Position 131 (His131) interacts with substrate. 3 residues coordinate pyridoxal 5'-phosphate: Ser176, His204, and Thr233. N6-(pyridoxal phosphate)lysine is present on Lys236. Residue Thr350 coordinates substrate.

Belongs to the class-II pyridoxal-phosphate-dependent aminotransferase family. BioF subfamily. In terms of assembly, homodimer. The cofactor is pyridoxal 5'-phosphate.

The enzyme catalyses 6-carboxyhexanoyl-[ACP] + L-alanine + H(+) = (8S)-8-amino-7-oxononanoate + holo-[ACP] + CO2. It functions in the pathway cofactor biosynthesis; biotin biosynthesis. In terms of biological role, catalyzes the decarboxylative condensation of pimeloyl-[acyl-carrier protein] and L-alanine to produce 8-amino-7-oxononanoate (AON), [acyl-carrier protein], and carbon dioxide. This Ectopseudomonas mendocina (strain ymp) (Pseudomonas mendocina) protein is 8-amino-7-oxononanoate synthase.